The primary structure comprises 351 residues: Porphobilinogen deaminase (351 aa).

Residue cysteine 242 is modified to S-(dipyrrolylmethanemethyl)cysteine.

It belongs to the HMBS family. As to quaternary structure, monomer. It depends on dipyrromethane as a cofactor.

The catalysed reaction is 4 porphobilinogen + H2O = hydroxymethylbilane + 4 NH4(+). Its pathway is porphyrin-containing compound metabolism; protoporphyrin-IX biosynthesis; coproporphyrinogen-III from 5-aminolevulinate: step 2/4. Functionally, tetrapolymerization of the monopyrrole PBG into the hydroxymethylbilane pre-uroporphyrinogen in several discrete steps. This is Porphobilinogen deaminase from Rickettsia africae (strain ESF-5).